Consider the following 464-residue polypeptide: MMARRDPTSWAKRLVRAQTLQKQRRAPVGPRAPPPDEEDPRLKCKNCGAFGHTARSTRCPMKCWKAALVPATLGKKEGKENLKPWKPRVEANPGPLNKDKGEKEERPRQQDPQRKALLHMFSGKPPEKPLPNGKGSTEPSDYLRVASGPMPVHTTSKRPRLDPVLADRSATEMSGRGSVLASLSPLRKASLSSSSSLGPKERQTGAAADMPQPAVRHQGREPLLVVKPTHSRPEGGCREVPQAASKTHGLLQAARPQAQDKRPAVTSQPCPPAATHSLGLGSNLSFGPGAKRPAQAPIQACLNFPKKPRLGPFQIPESAIQGGELGAPENLQPPPAATELGPSTSPQMGRRTPAQVPSVDRQPPHSRPCLPTAQACTMSHHPAASHDGAQPLRVLFRRLENGRWSSSLLAAPSFHSPEKPGAFLAQSPHVSEKSEAPCVRVPPSVLYEDLQVSSSSEDSDSDLE.

Disordered stretches follow at residues 1–42, 70–389, and 415–437; these read MMAR…DPRL, PATL…HDGA, and HSPE…SEAP. Basic and acidic residues-rich tracts occupy residues 74 to 89 and 97 to 114; these read GKKE…KPRV and NKDK…DPQR. A compositionally biased stretch (low complexity) spans 180–197; it reads LASLSPLRKASLSSSSSL.

It belongs to the FAM90 family.

The sequence is that of Protein FAM90A15 from Homo sapiens (Human).